Consider the following 273-residue polypeptide: Glutamate racemase (273 aa).

Substrate contacts are provided by residues 10–11 (DS) and 42–43 (YG). Cys73 functions as the Proton donor/acceptor in the catalytic mechanism. Residue 74–75 (NT) coordinates substrate. Cys184 acts as the Proton donor/acceptor in catalysis. 185-186 (TH) serves as a coordination point for substrate.

It belongs to the aspartate/glutamate racemases family.

The catalysed reaction is L-glutamate = D-glutamate. It participates in cell wall biogenesis; peptidoglycan biosynthesis. Provides the (R)-glutamate required for cell wall biosynthesis. In Desulforudis audaxviator (strain MP104C), this protein is Glutamate racemase.